The sequence spans 769 residues: Sensor protein DivL (769 aa).

A helical transmembrane segment spans residues 6-26; it reads LILAAAAGAVCLAISVALWSH. The 212-residue stretch at 547–758 folds into the Histidine kinase domain; that stretch reads NVSYELRTPL…TFTCHLPETQ (212 aa). Position 550 is a phosphotyrosine; by autocatalysis (tyrosine 550).

Post-translationally, autophosphorylated.

The protein localises to the cell membrane. It catalyses the reaction ATP + protein L-histidine = ADP + protein N-phospho-L-histidine.. Its function is as follows. Required for cell division and growth. It catalyzes the phosphorylation of CtrA and activates transcription in vitro of the cell cycle-regulated fliF promoter. This Caulobacter vibrioides (strain ATCC 19089 / CIP 103742 / CB 15) (Caulobacter crescentus) protein is Sensor protein DivL (divL).